We begin with the raw amino-acid sequence, 162 residues long: 6,7-dimethyl-8-ribityllumazine synthase (162 aa).

5-amino-6-(D-ribitylamino)uracil is bound by residues Phe23, 61-63 (AYE), and 85-87 (AVI). 90–91 (DT) contributes to the (2S)-2-hydroxy-3-oxobutyl phosphate binding site. The Proton donor role is filled by His93. A 5-amino-6-(D-ribitylamino)uracil-binding site is contributed by Phe118. Position 132 (Arg132) interacts with (2S)-2-hydroxy-3-oxobutyl phosphate.

The protein belongs to the DMRL synthase family.

The enzyme catalyses (2S)-2-hydroxy-3-oxobutyl phosphate + 5-amino-6-(D-ribitylamino)uracil = 6,7-dimethyl-8-(1-D-ribityl)lumazine + phosphate + 2 H2O + H(+). It functions in the pathway cofactor biosynthesis; riboflavin biosynthesis; riboflavin from 2-hydroxy-3-oxobutyl phosphate and 5-amino-6-(D-ribitylamino)uracil: step 1/2. Catalyzes the formation of 6,7-dimethyl-8-ribityllumazine by condensation of 5-amino-6-(D-ribitylamino)uracil with 3,4-dihydroxy-2-butanone 4-phosphate. This is the penultimate step in the biosynthesis of riboflavin. The sequence is that of 6,7-dimethyl-8-ribityllumazine synthase from Synechococcus sp. (strain CC9902).